The primary structure comprises 113 residues: UPF0482 protein KPN78578_15540 (113 aa).

The first 28 residues, 1 to 28 (MNMTLNKRWCLTAILALSAVVYTSSSYA), serve as a signal peptide directing secretion. The disordered stretch occupies residues 38–60 (GDSAQSRQQASMEKEQWNDTRSL). The segment covering 39-48 (DSAQSRQQAS) has biased composition (polar residues). The span at 49-59 (MEKEQWNDTRS) shows a compositional bias: basic and acidic residues.

This sequence belongs to the UPF0482 family.

This Klebsiella pneumoniae subsp. pneumoniae (strain ATCC 700721 / MGH 78578) protein is UPF0482 protein KPN78578_15540.